A 528-amino-acid chain; its full sequence is O-methylsterigmatocystin oxidoreductase (528 aa).

Position 440 (Cys-440) interacts with heme.

It belongs to the cytochrome P450 family. It depends on heme as a cofactor.

It catalyses the reaction 8-O-methylsterigmatocystin + 2 reduced [NADPH--hemoprotein reductase] + 2 O2 = aflatoxin B1 + methanol + 2 oxidized [NADPH--hemoprotein reductase] + CO2 + H2O + 2 H(+). The enzyme catalyses 8-O-methyldihydrosterigmatocystin + 2 reduced [NADPH--hemoprotein reductase] + 2 O2 = aflatoxin B2 + methanol + 2 oxidized [NADPH--hemoprotein reductase] + CO2 + H2O + 2 H(+). It functions in the pathway mycotoxin biosynthesis; aflatoxin biosynthesis. In terms of biological role, converts O-methylsterigmatocystin (OMST) to aflatoxin B1 and converts dihydro-O-methylsterigmatocystin (DHOMST) to aflatoxin B2 in the aflatoxin biosynthesis pathway. In Aspergillus flavus, this protein is O-methylsterigmatocystin oxidoreductase (ordA).